The chain runs to 445 residues: Acyl-CoA Delta-4 desaturase (445 aa).

The Cytochrome b5 heme-binding domain maps to 19–96; it reads AGVYTWEEVQ…MKPLLVGELA (78 aa). The next 4 membrane-spanning stretches (helical) occupy residues 132-152, 153-173, 266-286, and 307-327; these read LFFLLHLGHILLLEALALLMV, WHWGTGWLQTLLCAVMLATAQ, YFFLVAPPLLIPVFYNYNIMM, and YMLCYVPVYGLFGSLALMMFA.

Belongs to the fatty acid desaturase type 1 family.

It is found in the membrane. The enzyme catalyses (8Z,11Z,14Z,17Z)-eicosatetraenoyl-CoA + 2 Fe(II)-[cytochrome b5] + O2 + 2 H(+) = (5Z,8Z,11Z,14Z,17Z)-eicosapentaenoyl-CoA + 2 Fe(III)-[cytochrome b5] + 2 H2O. It catalyses the reaction (7Z,10Z,13Z,16Z)-docosatetraenoyl-CoA + 2 Fe(II)-[cytochrome b5] + O2 + 2 H(+) = (4Z,7Z,10Z,13Z,16Z)-docosapentaenoyl-CoA + 2 Fe(III)-[cytochrome b5] + 2 H2O. The catalysed reaction is (7Z,10Z,13Z,16Z,19Z)-docosapentaenoyl-CoA + 2 Fe(II)-[cytochrome b5] + O2 + 2 H(+) = (4Z,7Z,10Z,13Z,16Z,19Z)-docosahexaenoyl-CoA + 2 Fe(III)-[cytochrome b5] + 2 H2O. The protein operates within lipid metabolism; polyunsaturated fatty acid biosynthesis. In terms of biological role, fatty acid desaturase with bifunctional delta-4 and delta-5 activities. Component of a lipid metabolic pathway that catalyzes the biosynthesis of polyunsaturated fatty acids (PUFA) with preference toward n-3 substrates and Delta(4)function. This chain is Acyl-CoA Delta-4 desaturase, found in Siganus canaliculatus (White-spotted spinefoot).